The primary structure comprises 258 residues: Venom plasminogen activator Haly-PA (258 aa).

Positions 1–18 (MALIRVLANLLILQLSYA) are cleaved as a signal peptide. The propeptide occupies 19 to 24 (QKSSEL). The region spanning 25-249 (VVGGDECNIN…HLDWIKSIIA (225 aa)) is the Peptidase S1 domain. 6 disulfides stabilise this stretch: Cys31-Cys163, Cys50-Cys66, Cys98-Cys256, Cys142-Cys210, Cys174-Cys189, and Cys200-Cys225. Asn44 carries an N-linked (GlcNAc...) asparagine glycan. Catalysis depends on charge relay system residues His65 and Asp110. The active-site Charge relay system is Ser204.

It belongs to the peptidase S1 family. Snake venom subfamily. As to quaternary structure, monomer. In terms of processing, glycosylated. As to expression, expressed by the venom gland.

The protein resides in the secreted. Snake venom serine protease that activates plasminogen. Displays indirect fibrino(geno)lytic activity through conversion of plasminogen to plasmin. Shows a preferential cleavage at Arg-|-Xaa instead of Lys-|-Xaa bonds. This chain is Venom plasminogen activator Haly-PA, found in Gloydius brevicauda (Korean slamosa snake).